The primary structure comprises 213 residues: Motile sperm domain-containing protein 1 (213 aa).

The 128-residue stretch at 16–143 (PVFVFPTELI…KEHLTESLFF (128 aa)) folds into the MSP domain. A run of 2 helical transmembrane segments spans residues 159-179 (SLLT…PTLG) and 191-211 (LSVN…MAIF). The Nuclear export signal signature appears at 205 to 208 (LITM).

The protein localises to the endoplasmic reticulum membrane. It localises to the golgi apparatus membrane. Functionally, plays a role in differentiation and/or proliferation of mesenchymal stem cells. Proposed to be involved in epithelial-to-mesenchymal transition (EMT). However, another study suggests that it is not required for EMT or stem cell self-renewal and acts during later stages of differentiation. The sequence is that of Motile sperm domain-containing protein 1 (MOSPD1) from Bos taurus (Bovine).